We begin with the raw amino-acid sequence, 652 residues long: UvrABC system protein C (652 aa).

Positions Lys-37 to Ile-116 constitute a GIY-YIG domain. Residues Asp-226–Leu-261 form the UVR domain.

Belongs to the UvrC family. In terms of assembly, interacts with UvrB in an incision complex.

It is found in the cytoplasm. The UvrABC repair system catalyzes the recognition and processing of DNA lesions. UvrC both incises the 5' and 3' sides of the lesion. The N-terminal half is responsible for the 3' incision and the C-terminal half is responsible for the 5' incision. The chain is UvrABC system protein C from Prochlorococcus marinus (strain MIT 9312).